Consider the following 1463-residue polypeptide: Gag-Pol polyprotein (1463 aa).

A lipid anchor (N-myristoyl glycine; by host) is attached at glycine 2. The interval 7–31 is interaction with Gp41; the sequence is VLRGKKADELEKIRLRPGGKKKYRL. The short motif at 16–22 is the Nuclear export signal element; the sequence is LEKIRLR. Positions 26–32 match the Nuclear localization signal motif; the sequence is KKKYRLK. The disordered stretch occupies residues 112–138; the sequence is TKTTEKMPSTSRPTAPPSGNGGNFPVQ. Residues 191–228 form an interaction with human PPIA/CYPA and NUP153 region; sequence NCVGDHQAAMQIIREIINEEAADWDAQHPIPGPLPAGQ. Positions 279 to 365 are dimerization/Multimerization of capsid protein p24; that stretch reads YNPTNILDIK…GGPGQKARLM (87 aa). 2 consecutive CCHC-type zinc fingers follow at residues 389–406 and 410–427; these read IKCW…QCRA and QGCW…KCPE. Positions 441–508 are disordered; that stretch reads EAPQFPCGPN…TRDTMQRDDR (68 aa). Over residues 462–508 the composition is skewed to basic and acidic residues; it reads RPSRGPTREVHAAREKAERAEREAIQRSDRGLPAARETRDTMQRDDR. The interval 513-517 is dimerization of protease; that stretch reads PQFSL. The Peptidase A2 domain maps to 532-601; the sequence is VEVLLDTGAD…TPINIFGRNI (70 aa). The For protease activity; shared with dimeric partner role is filled by aspartate 537. Dimerization of protease regions lie at residues 561 to 567 and 600 to 612; these read GIGGFIN and NILT…LNLP. The region spanning 655-845 is the Reverse transcriptase domain; that stretch reads EGQLEEAPPT…PPYQWMGYEL (191 aa). Mg(2+) is bound by residues aspartate 721, aspartate 796, and aspartate 797. The interval 838–846 is RT 'primer grip'; sequence YQWMGYELW. The Tryptophan repeat motif motif lies at 1008–1024; sequence WEQWWDNYWQVTWIPDW. The RNase H type-1 domain maps to 1044 to 1167; sequence ILGAETFYTD…VDHLVSQGIR (124 aa). Mg(2+) is bound by residues aspartate 1053, glutamate 1088, aspartate 1108, and aspartate 1159. An Integrase-type zinc finger spans residues 1173 to 1214; it reads EKIEPAQEEHEKYHSNVKELSHKFGLPKLVARQIVNTCTQCQ. Zn(2+)-binding residues include histidine 1182, histidine 1186, cysteine 1210, and cysteine 1213. One can recognise an Integrase catalytic domain in the interval 1223-1374; sequence QVNAELGTWQ…TPAERLINMV (152 aa). Aspartate 1234, aspartate 1286, and glutamate 1322 together coordinate Mg(2+). A DNA-binding region (integrase-type) is located at residues 1393 to 1440; that stretch reads FRVYFREGRDQLWKGPGELLWKGDGAVIVKVGADIKIIPRRKAKIIKD.

Homotrimer; further assembles as hexamers of trimers. Interacts with gp41 (via C-terminus). Interacts with host CALM1; this interaction induces a conformational change in the Matrix protein, triggering exposure of the myristate group. Interacts with host AP3D1; this interaction allows the polyprotein trafficking to multivesicular bodies during virus assembly. Part of the pre-integration complex (PIC) which is composed of viral genome, matrix protein, Vpr and integrase. As to quaternary structure, homodimer; the homodimer further multimerizes as homohexamers or homopentamers. Interacts with human PPIA/CYPA. Interacts with human NUP153. Interacts with host PDZD8; this interaction stabilizes the capsid. Interacts with monkey TRIM5; this interaction destabilizes the capsid. In terms of assembly, homodimer, whose active site consists of two apposed aspartic acid residues. Heterodimer of p66 RT and p51 RT (RT p66/p51). Heterodimerization of RT is essential for DNA polymerase activity. The overall folding of the subdomains is similar in p66 RT and p51 RT but the spatial arrangements of the subdomains are dramatically different. As to quaternary structure, homotetramer; may further associate as a homohexadecamer. Part of the pre-integration complex (PIC) which is composed of viral genome, matrix protein, Vpr and integrase. Interacts with human SMARCB1/INI1 and human PSIP1/LEDGF isoform 1. Interacts with human KPNA3; this interaction might play a role in nuclear import of the pre-integration complex. Interacts with human NUP153; this interaction might play a role in nuclear import of the pre-integration complex. It depends on Mg(2+) as a cofactor. Post-translationally, specific enzymatic cleavages by the viral protease yield mature proteins. The protease is released by autocatalytic cleavage. The polyprotein is cleaved during and after budding, this process is termed maturation. Proteolytic cleavage of p66 RT removes the RNase H domain to yield the p51 RT subunit. Nucleocapsid protein p7 might be further cleaved after virus entry.

It is found in the host cell membrane. The protein localises to the host endosome. Its subcellular location is the host multivesicular body. The protein resides in the virion membrane. It localises to the host nucleus. It is found in the host cytoplasm. The protein localises to the virion. It carries out the reaction Endopeptidase for which the P1 residue is preferably hydrophobic.. The enzyme catalyses Endohydrolysis of RNA in RNA/DNA hybrids. Three different cleavage modes: 1. sequence-specific internal cleavage of RNA. Human immunodeficiency virus type 1 and Moloney murine leukemia virus enzymes prefer to cleave the RNA strand one nucleotide away from the RNA-DNA junction. 2. RNA 5'-end directed cleavage 13-19 nucleotides from the RNA end. 3. DNA 3'-end directed cleavage 15-20 nucleotides away from the primer terminus.. The catalysed reaction is 3'-end directed exonucleolytic cleavage of viral RNA-DNA hybrid.. It catalyses the reaction DNA(n) + a 2'-deoxyribonucleoside 5'-triphosphate = DNA(n+1) + diphosphate. With respect to regulation, protease: The viral protease is inhibited by many synthetic protease inhibitors (PIs), such as amprenavir, atazanavir, indinavir, loprinavir, nelfinavir, ritonavir and saquinavir. Use of protease inhibitors in tritherapy regimens permit more ambitious therapeutic strategies. Reverse transcriptase/ribonuclease H: RT can be inhibited either by nucleoside RT inhibitors (NRTIs) or by non nucleoside RT inhibitors (NNRTIs). NRTIs act as chain terminators, whereas NNRTIs inhibit DNA polymerization by binding a small hydrophobic pocket near the RT active site and inducing an allosteric change in this region. Classical NRTIs are abacavir, adefovir (PMEA), didanosine (ddI), lamivudine (3TC), stavudine (d4T), tenofovir (PMPA), zalcitabine (ddC), and zidovudine (AZT). Classical NNRTIs are atevirdine (BHAP U-87201E), delavirdine, efavirenz (DMP-266), emivirine (I-EBU), and nevirapine (BI-RG-587). The tritherapies used as a basic effective treatment of AIDS associate two NRTIs and one NNRTI. Mediates, with Gag polyprotein, the essential events in virion assembly, including binding the plasma membrane, making the protein-protein interactions necessary to create spherical particles, recruiting the viral Env proteins, and packaging the genomic RNA via direct interactions with the RNA packaging sequence (Psi). Gag-Pol polyprotein may regulate its own translation, by the binding genomic RNA in the 5'-UTR. At low concentration, the polyprotein would promote translation, whereas at high concentration, the polyprotein would encapsidate genomic RNA and then shut off translation. In terms of biological role, targets the polyprotein to the plasma membrane via a multipartite membrane-binding signal, that includes its myristoylated N-terminus. Matrix protein is part of the pre-integration complex. Implicated in the release from host cell mediated by Vpu. Binds to RNA. Functionally, forms the conical core that encapsulates the genomic RNA-nucleocapsid complex in the virion. Most core are conical, with only 7% tubular. The core is constituted by capsid protein hexamer subunits. The core is disassembled soon after virion entry. Host restriction factors such as TRIM5-alpha or TRIMCyp bind retroviral capsids and cause premature capsid disassembly, leading to blocks in reverse transcription. Capsid restriction by TRIM5 is one of the factors which restricts HIV-1 to the human species. Host PIN1 apparently facilitates the virion uncoating. On the other hand, interactions with PDZD8 or CYPA stabilize the capsid. Its function is as follows. Encapsulates and protects viral dimeric unspliced genomic RNA (gRNA). Binds these RNAs through its zinc fingers. Acts as a nucleic acid chaperone which is involved in rearangement of nucleic acid secondary structure during gRNA retrotranscription. Also facilitates template switch leading to recombination. As part of the polyprotein, participates in gRNA dimerization, packaging, tRNA incorporation and virion assembly. Aspartyl protease that mediates proteolytic cleavages of Gag and Gag-Pol polyproteins during or shortly after the release of the virion from the plasma membrane. Cleavages take place as an ordered, step-wise cascade to yield mature proteins. This process is called maturation. Displays maximal activity during the budding process just prior to particle release from the cell. Also cleaves Nef and Vif, probably concomitantly with viral structural proteins on maturation of virus particles. Hydrolyzes host EIF4GI and PABP1 in order to shut off the capped cellular mRNA translation. The resulting inhibition of cellular protein synthesis serves to ensure maximal viral gene expression and to evade host immune response. In terms of biological role, multifunctional enzyme that converts the viral RNA genome into dsDNA in the cytoplasm, shortly after virus entry into the cell. This enzyme displays a DNA polymerase activity that can copy either DNA or RNA templates, and a ribonuclease H (RNase H) activity that cleaves the RNA strand of RNA-DNA heteroduplexes in a partially processive 3' to 5' endonucleasic mode. Conversion of viral genomic RNA into dsDNA requires many steps. A tRNA(3)-Lys binds to the primer-binding site (PBS) situated at the 5'-end of the viral RNA. RT uses the 3' end of the tRNA primer to perform a short round of RNA-dependent minus-strand DNA synthesis. The reading proceeds through the U5 region and ends after the repeated (R) region which is present at both ends of viral RNA. The portion of the RNA-DNA heteroduplex is digested by the RNase H, resulting in a ssDNA product attached to the tRNA primer. This ssDNA/tRNA hybridizes with the identical R region situated at the 3' end of viral RNA. This template exchange, known as minus-strand DNA strong stop transfer, can be either intra- or intermolecular. RT uses the 3' end of this newly synthesized short ssDNA to perform the RNA-dependent minus-strand DNA synthesis of the whole template. RNase H digests the RNA template except for two polypurine tracts (PPTs) situated at the 5'-end and near the center of the genome. It is not clear if both polymerase and RNase H activities are simultaneous. RNase H probably can proceed both in a polymerase-dependent (RNA cut into small fragments by the same RT performing DNA synthesis) and a polymerase-independent mode (cleavage of remaining RNA fragments by free RTs). Secondly, RT performs DNA-directed plus-strand DNA synthesis using the PPTs that have not been removed by RNase H as primers. PPTs and tRNA primers are then removed by RNase H. The 3' and 5' ssDNA PBS regions hybridize to form a circular dsDNA intermediate. Strand displacement synthesis by RT to the PBS and PPT ends produces a blunt ended, linear dsDNA copy of the viral genome that includes long terminal repeats (LTRs) at both ends. Functionally, catalyzes viral DNA integration into the host chromosome, by performing a series of DNA cutting and joining reactions. This enzyme activity takes place after virion entry into a cell and reverse transcription of the RNA genome in dsDNA. The first step in the integration process is 3' processing. This step requires a complex comprising the viral genome, matrix protein, Vpr and integrase. This complex is called the pre-integration complex (PIC). The integrase protein removes 2 nucleotides from each 3' end of the viral DNA, leaving recessed CA OH's at the 3' ends. In the second step, the PIC enters cell nucleus. This process is mediated through integrase and Vpr proteins, and allows the virus to infect a non dividing cell. This ability to enter the nucleus is specific of lentiviruses, other retroviruses cannot and rely on cell division to access cell chromosomes. In the third step, termed strand transfer, the integrase protein joins the previously processed 3' ends to the 5' ends of strands of target cellular DNA at the site of integration. The 5'-ends are produced by integrase-catalyzed staggered cuts, 5 bp apart. A Y-shaped, gapped, recombination intermediate results, with the 5'-ends of the viral DNA strands and the 3' ends of target DNA strands remaining unjoined, flanking a gap of 5 bp. The last step is viral DNA integration into host chromosome. This involves host DNA repair synthesis in which the 5 bp gaps between the unjoined strands are filled in and then ligated. Since this process occurs at both cuts flanking the HIV genome, a 5 bp duplication of host DNA is produced at the ends of HIV-1 integration. Alternatively, Integrase may catalyze the excision of viral DNA just after strand transfer, this is termed disintegration. The sequence is that of Gag-Pol polyprotein (gag-pol) from Human immunodeficiency virus type 2 subtype A (isolate ST) (HIV-2).